A 474-amino-acid chain; its full sequence is 3-isopropylmalate dehydratase large subunit (474 aa).

Residues 293 to 313 (GTTPGQGIGITEEIPAPEDLP) form a disordered region. Positions 348, 408, and 411 each coordinate [4Fe-4S] cluster.

The protein belongs to the aconitase/IPM isomerase family. LeuC type 1 subfamily. In terms of assembly, heterodimer of LeuC and LeuD. [4Fe-4S] cluster is required as a cofactor.

It catalyses the reaction (2R,3S)-3-isopropylmalate = (2S)-2-isopropylmalate. It functions in the pathway amino-acid biosynthesis; L-leucine biosynthesis; L-leucine from 3-methyl-2-oxobutanoate: step 2/4. Its function is as follows. Catalyzes the isomerization between 2-isopropylmalate and 3-isopropylmalate, via the formation of 2-isopropylmaleate. The sequence is that of 3-isopropylmalate dehydratase large subunit from Natronomonas pharaonis (strain ATCC 35678 / DSM 2160 / CIP 103997 / JCM 8858 / NBRC 14720 / NCIMB 2260 / Gabara) (Halobacterium pharaonis).